The chain runs to 313 residues: uncharacterized protein (313 aa).

The first 24 residues, 1–24 (MKRRRRWRGWLLFLALCFCLLCEA), serve as a signal peptide directing secretion. N-linked (GlcNAc...) asparagine; by host glycosylation is found at N28, N43, N57, N77, N101, N102, N109, N149, N168, N215, N222, N251, N254, and N267. Residues 47–73 (ATTGTTTTSPNVTSTTSNTVTTPTTVS) form a disordered region. The span at 90 to 114 (STVSGTRNTRNNNTTTIGTNATSPS) shows a compositional bias: low complexity. Positions 90-117 (STVSGTRNTRNNNTTTIGTNATSPSSSV) are disordered.

The protein belongs to the HHV-5 US34A protein family.

This is an uncharacterized protein from Homo sapiens (Human).